The primary structure comprises 215 residues: uncharacterized protein (215 aa).

The next 6 membrane-spanning stretches (helical) occupy residues 3–23 (LLAYIPTNVLATYLTLVLRSI), 30–50 (ANLLAIPNFVLHILLLFGLTW), 59–79 (LGLSLLQPLYTVPLLAVLRFW), 87–107 (WGTYAIITLILDNPYIHAICV), 122–142 (VSTCLYNMFVQAGLIISSNIY), and 156–176 (VLFGLALFMFPILIGSKLIYV).

Belongs to the major facilitator superfamily. Allantoate permease family.

It is found in the membrane. This is an uncharacterized protein from Saccharomyces cerevisiae (strain ATCC 204508 / S288c) (Baker's yeast).